We begin with the raw amino-acid sequence, 570 residues long: Mitogen-activated protein kinase 11 (570 aa).

The 292-residue stretch at 26-317 folds into the Protein kinase domain; that stretch reads YEVLEVIGKG…AQEALADPYF (292 aa). Residues 32 to 40 and K55 each bind ATP; that span reads IGKGSYGLV. D152 serves as the catalytic Proton acceptor. T188 carries the phosphothreonine modification. The TXY signature appears at 188 to 190; the sequence is TDY. Y190 is modified (phosphotyrosine).

This sequence belongs to the protein kinase superfamily. CMGC Ser/Thr protein kinase family. MAP kinase subfamily. Post-translationally, dually phosphorylated on Thr-188 and Tyr-190, which activates the enzyme.

It carries out the reaction L-seryl-[protein] + ATP = O-phospho-L-seryl-[protein] + ADP + H(+). The catalysed reaction is L-threonyl-[protein] + ATP = O-phospho-L-threonyl-[protein] + ADP + H(+). Activated by threonine and tyrosine phosphorylation. The sequence is that of Mitogen-activated protein kinase 11 (MPK11) from Oryza sativa subsp. japonica (Rice).